The primary structure comprises 781 residues: Catenin beta-1 (781 aa).

Alanine 2 is subject to N-acetylalanine. Residues alanine 2–serine 23 are interaction with VCL. A Phosphoserine; by GSK3-beta; alternate modification is found at serine 23. O-linked (GlcNAc) serine; alternate glycosylation occurs at serine 23. Position 29 is a phosphoserine; by GSK3-beta (serine 29). Phosphoserine; by GSK3-beta and HIPK2 occurs at positions 33 and 37. Residues glycine 34–aspartate 56 form a disordered region. Threonine 41 carries the phosphothreonine; by GSK3-beta modification. Position 45 is a phosphoserine (serine 45). Lysine 49 bears the N6-acetyllysine mark. Residue tyrosine 64 is modified to Phosphotyrosine; by PTK6. At tyrosine 142 the chain carries Phosphotyrosine; by FYN and PTK6. ARM repeat units follow at residues arginine 151 to serine 191, glutamine 193 to serine 234, glycine 235 to alanine 276, glycine 277 to serine 318, glycine 319 to alanine 360, glycine 361 to serine 389, glycine 400 to valine 441, glycine 442 to alanine 484, tyrosine 489 to glutamine 530, glycine 531 to glutamate 571, asparagine 594 to alanine 636, and threonine 637 to lysine 666. The tract at residues leucine 156–leucine 178 is interaction with BCL9. Residue serine 191 is modified to Phosphoserine; by CDK5. Residue serine 246 is modified to Phosphoserine; by CDK5. Residues tyrosine 331 and tyrosine 333 each carry the phosphotyrosine modification. A Phosphoserine; by AMPK modification is found at serine 552. Threonine 556 carries the phosphothreonine modification. Cysteine 619 is subject to S-nitrosocysteine. Position 675 is a phosphoserine (serine 675). A disordered region spans residues glutamate 705–leucine 781. Residues methionine 734 to glycine 745 show a composition bias toward basic and acidic residues. The interval asparagine 772–leucine 781 is interaction with SCRIB.

This sequence belongs to the beta-catenin family. Two separate complex-associated pools are found in the cytoplasm. The majority is present as component of an E-cadherin/ catenin adhesion complex composed of at least E-cadherin/CDH1 and beta-catenin/CTNNB1, and possibly alpha-catenin/CTNNA1; the complex is located to adherens junctions. The stable association of CTNNA1 is controversial as CTNNA1 was shown not to bind to F-actin when assembled in the complex. Alternatively, the CTNNA1-containing complex may be linked to F-actin by other proteins such as LIMA1. Another cytoplasmic pool is part of a large complex containing AXIN1, AXIN2, APC, CSNK1A1 and GSK3B that promotes phosphorylation on N-terminal Ser and Thr residues and ubiquitination of CTNNB1 via BTRC and its subsequent degradation by the proteasome. Wnt-dependent activation of DVL antagonizes the action of GSK3B. When GSK3B activity is inhibited the complex dissociates, CTNNB1 is dephosphorylated and is no longer targeted for destruction. The stabilized protein translocates to the nucleus, where it binds TCF/LEF-1 family members, BCL9, BCL9L and possibly also RUVBL1 and CHD8. Binds CTNNBIP and EP300. CTNNB1 forms a ternary complex with LEF1 and EP300 that is disrupted by CTNNBIP1 binding. Interacts with TAX1BP3 (via the PDZ domain); this interaction inhibits the transcriptional activity of CTNNB1. Interacts with AJAP1, BAIAP1, CARM1, CTNNA3, CXADR and PCDH11Y. Binds NHERF1. Interacts with GLIS2 and SLC30A9. Interacts with XIRP1 and MUC1. Interacts with PTPRU (via the cytoplasmic juxtamembrane domain) and with EMD. Interacts with SCRIB. Interacts with TNIK. Interacts with SESTD1 and TRPC4. Interacts directly with AXIN1; the interaction is regulated by CDK2 phosphorylation of AXIN1. Interacts with CAV1. Interacts with TRPV4. The TRPV4 and CTNNB1 complex can interact with CDH1. Interacts with VCL. Interacts with PTPRJ. Interacts with PKT7. Interacts with FAT1 (via the cytoplasmic domain). Interacts with NANOS1 and NDRG2. Interacts with NEK2, CDK2 and CDK5. Interacts with PTK6. Interacts with SOX7; this interaction may lead to proteasomal degradation of active CTNNB1 and thus inhibition of Wnt/beta-catenin-stimulated transcription. Identified in a complex with HINT1 and MITF. Interacts with FHIT. The CTNNB1 and TCF4 complex interacts with PML. Interacts with FERMT2. Identified in a complex with TCF4 and FERMT2. Interacts with RORA. May interact with P-cadherin/CDH3. Interacts with RAPGEF2. Interacts with RNF220. Interacts with CTNND2. Interacts (via the C-terminal region) with CBY1. The complex composed, at least, of APC, CTNNB1 and GSK3B interacts with JPT1; the interaction requires the inactive form of GSK3B (phosphorylated at 'Ser-9'). Interacts with DLG5. Interacts with FAM53B; promoting translocation to the nucleus. Interacts with TMEM170B. Interacts with AHI1. Interacts with GID8. Component of an cadherin:catenin adhesion complex composed of at least of CDH26, beta-catenin/CTNNB1, alpha-catenin/CTNNA1 and p120 catenin/CTNND1. Forms a complex comprising APPL1, RUVBL2, APPL2, HDAC1 and HDAC2. Interacts with IRF2BPL; mediates the ubiquitination and degradation of CTNNB1. Interacts with LMBR1L and AMFR. Interacts with LMBR1L. Interacts with SOX30; prevents interaction of CTNNB1 with TCF7L2/TCF4 and leads to inhibition of Wnt signaling. Interacts with SOX9; inhibiting CTNNB1 activity by competing with the binding sites of TCF/LEF within CTNNB1, thereby inhibiting the Wnt signaling. Interacts with SPN/CD43 cytoplasmic tail. Interacts (when phosphorylated at Tyr-333) with isoform M2 of PKM (PKM2); promoting transcription activation. Interacts with PKP2 (via HEAD domain). Interacts with CDH1. Interacts (when unphosphorylated) with FLYWCH1, perhaps preventing interaction of CTNNB1 with TCF4, and thereby regulating transcription activation; phosphorylation of CTNNB1 may inhibit the interaction. Interacts (via the central armadillo domains) with probable transcriptional regulator ADNP (via N-terminal region); interaction is direct and stabilizes CTNNB1 by modulating its phosphorylation by glycogen synthase kinase-3 beta GSK3B. Interacts with NR5A2. Interacts with DSG2; the interaction promotes localization of CTNNB1 at cell junctions thus reducing its nuclear localization and subsequent transcription of CTNNB1/TCF-target genes. Post-translationally, phosphorylation by GSK3B requires prior phosphorylation of Ser-45 by another kinase. Phosphorylation proceeds then from Thr-41 to Ser-33. Phosphorylated by NEK2. EGF stimulates tyrosine phosphorylation. Phosphorylated on Ser-33 and Ser-37 by HIPK2. This phosphorylation triggers proteasomal degradation. Phosphorylation at Ser-552 by AMPK promotes stabilization of the protein, enhancing TCF/LEF-mediated transcription. Phosphorylation on Ser-191 and Ser-246 by CDK5. Phosphorylation by CDK2 regulates insulin internalization. Phosphorylation by PTK6 at Tyr-64, Tyr-142, Tyr-331 and/or Tyr-333 with the predominant site at Tyr-64 is not essential for inhibition of transcriptional activity. Phosphorylation by SRC at Tyr-333 promotes interaction with isoform M2 of PKM (PKM2); promoting transcription activation. Ubiquitinated by the SCF(BTRC) E3 ligase complex when phosphorylated by GSK3B, leading to its degradation. Ubiquitinated by a E3 ubiquitin ligase complex containing UBE2D1, SIAH1, CACYBP/SIP, SKP1, APC and TBL1X, leading to its subsequent proteasomal degradation. Ubiquitinated and degraded following interaction with SOX9. Ubiquitinated via 'Lys-11'- and 'Lys-29'-linked ubiquitin chains by UBR5, leading to its stabilization. In terms of processing, S-nitrosylation at Cys-619 within adherens junctions promotes VEGF-induced, NO-dependent endothelial cell permeability by disrupting interaction with E-cadherin, thus mediating disassembly adherens junctions. Post-translationally, O-glycosylation at Ser-23 decreases nuclear localization and transcriptional activity, and increases localization to the plasma membrane and interaction with E-cadherin CDH1. Deacetylated at Lys-49 by SIRT1.

It localises to the cytoplasm. The protein localises to the nucleus. The protein resides in the cytoskeleton. Its subcellular location is the cell junction. It is found in the adherens junction. It localises to the cell membrane. The protein localises to the microtubule organizing center. The protein resides in the centrosome. Its subcellular location is the spindle pole. It is found in the synapse. It localises to the cilium basal body. In terms of biological role, key downstream component of the canonical Wnt signaling pathway. In the absence of Wnt, forms a complex with AXIN1, AXIN2, APC, CSNK1A1 and GSK3B that promotes phosphorylation on N-terminal Ser and Thr residues and ubiquitination of CTNNB1 via BTRC and its subsequent degradation by the proteasome. In the presence of Wnt ligand, CTNNB1 is not ubiquitinated and accumulates in the nucleus, where it acts as a coactivator for transcription factors of the TCF/LEF family, leading to activate Wnt responsive genes. Also acts as a coactivator for other transcription factors, such as NR5A2. Promotes epithelial to mesenchymal transition/mesenchymal to epithelial transition (EMT/MET) via driving transcription of CTNNB1/TCF-target genes. Involved in the regulation of cell adhesion, as component of an E-cadherin:catenin adhesion complex. Acts as a negative regulator of centrosome cohesion. Involved in the CDK2/PTPN6/CTNNB1/CEACAM1 pathway of insulin internalization. Blocks anoikis of malignant kidney and intestinal epithelial cells and promotes their anchorage-independent growth by down-regulating DAPK2. Disrupts PML function and PML-NB formation by inhibiting RANBP2-mediated sumoylation of PML. Promotes neurogenesis by maintaining sympathetic neuroblasts within the cell cycle. Involved in chondrocyte differentiation via interaction with SOX9: SOX9-binding competes with the binding sites of TCF/LEF within CTNNB1, thereby inhibiting the Wnt signaling. Acts as a positive regulator of odontoblast differentiation during mesenchymal tooth germ formation, via promoting the transcription of differentiation factors such as LEF1, BMP2 and BMP4. Activity is repressed in a MSX1-mediated manner at the bell stage of mesenchymal tooth germ formation which prevents premature differentiation of odontoblasts. The chain is Catenin beta-1 from Bos taurus (Bovine).